Reading from the N-terminus, the 783-residue chain is MNRKKHQILKILLLCLISSKSSASEKELNLQFIRHKFGQNTEDIELFFNSSTVLPGNYTVDVKLNDEVIGRAKLEVSQDDKESYCLKDEWLSDLGIIINRDFYNKYFNIKRECYEIGKEKNSITTFDNNSQIFSLYMPQAAYIKKGNTEHKWSYGDPGFNLNYDAYLSKNDEDSSIYGNLEGNVNIDKWVLYGRGYKYEHDKFTTDDVTLSRAIKSLEGDLIIGDTYTNTSLMDNISFYGVQLRSNNAMTPERRGDYSPIISGIAKSNARVTVKQNGVVLHSELVSPGPFHINNVRGIRSGELVMTVTEEDGSEQQTRIPVTFIANLLSPGNYNYDFGIGNKEATWEPDNIFAYGSFDYGLNLLTLNASLLFEQHYSNAGIGAVGSIGSLGAVSVSGNISRAKNQLETDQGYSTSANYSKNVGANGNLQIIGYKFSSEGYTQYANFDYRAPRKDKKEKERYEVTLTQQFPASNVFLSVTGWKKFYWNDNSVTGANVSYTQNFGTVNASVNGSYSRGDGAKSDYMLGFNINIPFRHNDRQFYSNSGVTYNRNSGIGFNAGFSEDVTKNFNYNVNAAASKDNESVSLSTNYTSSMFRTSASVSKNRNSTNASAQIGGAIIGVKDGGVMLTSMSSNSVAIVQMEGLAGYAFTNGVESDWRGRIAYPMTTYMDNDIQISTDKLPSNIELTDNVETIVPTNRAIKLQKIKYKNMSRHVLKVYDKNGFVIPMGTAVKNSNGEIISFVNNNGISLLNIDKNDERVFFGSCTISTSGLKDNLSEIQEVNCE.

An N-terminal signal peptide occupies residues 1–23 (MNRKKHQILKILLLCLISSKSSA). Cysteines 763 and 782 form a disulfide.

It belongs to the fimbrial export usher family.

The protein localises to the cell outer membrane. Its function is as follows. Involved in the export and assembly of K99 fimbrial subunits across the outer membrane. In Escherichia coli, this protein is Outer membrane usher protein FanD (fanD).